A 267-amino-acid chain; its full sequence is Large ribosomal subunit protein bL9m (267 aa).

The transit peptide at 1-52 directs the protein to the mitochondrion; the sequence is MAALVVTEPGRALLRAGTERLLRGGIQELLRPRHEGNSPGLARDFSLSQNRG.

This sequence belongs to the bacterial ribosomal protein bL9 family. As to quaternary structure, component of the mitochondrial ribosome large subunit (39S) which comprises a 16S rRNA and about 50 distinct proteins.

The protein localises to the mitochondrion. The polypeptide is Large ribosomal subunit protein bL9m (MRPL9) (Papio anubis (Olive baboon)).